Consider the following 115-residue polypeptide: Large ribosomal subunit protein bL20 (115 aa).

This sequence belongs to the bacterial ribosomal protein bL20 family.

In terms of biological role, binds directly to 23S ribosomal RNA and is necessary for the in vitro assembly process of the 50S ribosomal subunit. It is not involved in the protein synthesizing functions of that subunit. This Chlorobium chlorochromatii (strain CaD3) protein is Large ribosomal subunit protein bL20.